The primary structure comprises 1031 residues: MMS19 nucleotide excision repair protein homolog (1031 aa).

N-acetylalanine is present on Ala2. 4 HEAT repeats span residues 867–905, 909–947, 950–988, and 991–1029; these read QRFFTDNVPALVQGFHAAPQDVKPNYLKGLSHVLNRLPK, LPELPTLLSLLLEALSCPDSVVQLSTLSCLQPLLLEAPQ, SLHVDTLVTKFLNLSSSYSMAVRIAALQCMHALTRLPTS, and LPYKSQVIRALAKPLDDKKRLVRKEAVSARGEWFLLGSP. Ser1028 carries the phosphoserine modification.

This sequence belongs to the MET18/MMS19 family. Component of the CIA complex. In the CIA complex, interacts directly with CIAO2B and CIAO3. Component of the MMXD complex, composed of CIAO1, ERCC2, CIAO2B, MMS19 and SLC25A5. Interacts with CIAO2B; the interaction is direct. Interacts with ERCC2/XPD; the interaction is direct. Interacts with ERCC3/XPB and NCOA3/RAC3. Interacts with RTEL1; the interaction mediates the association of RTEL1 with the CIA complex. Interacts with BRIP1. Interacts with KIF4A; the interaction facilitates the transfer of Fe-S clusters to KIF4A to ensure proper localization of KIF4A to the mitotic machinery components. Interacts with CCDC117; the interaction is indirect. Post-translationally, ubiquitinated; undergoes 'Lys-48'-linked polyubiquitination. In terms of tissue distribution, ubiquitously expressed with higher expression in testis.

It localises to the nucleus. It is found in the cytoplasm. The protein localises to the cytoskeleton. The protein resides in the spindle. Functionally, key component of the cytosolic iron-sulfur protein assembly (CIA) complex, a multiprotein complex that mediates the incorporation of iron-sulfur cluster into apoproteins specifically involved in DNA metabolism and genomic integrity. In the CIA complex, MMS19 acts as an adapter between early-acting CIA components and a subset of cellular target Fe/S proteins such as ERCC2/XPD, FANCJ and RTEL1, thereby playing a key role in nucleotide excision repair (NER), homologous recombination-mediated double-strand break DNA repair, DNA replication and RNA polymerase II (POL II) transcription. As a CIA complex component and in collaboration with CIAO1 and CIAO2, binds to and facilitates the assembly of most cytosolic-nuclear Fe/S proteins. As part of the mitotic spindle-associated MMXD complex, plays a role in chromosome segregation, probably by facilitating iron-sulfur cluster assembly into ERCC2/XPD. Together with CIAO2, facilitates the transfer of Fe-S clusters to the motor protein KIF4A, which ensures proper localization of KIF4A to mitotic machinery components to promote the progression of mitosis. Indirectly acts as a transcriptional coactivator of estrogen receptor (ER), via its role in iron-sulfur insertion into some component of the TFIIH-machinery. This chain is MMS19 nucleotide excision repair protein homolog, found in Mus musculus (Mouse).